Here is a 403-residue protein sequence, read N- to C-terminus: MAKFNRIHLVVMDSVGIGAAPDANNFVNAGVPDGASDTLGHISKTVGLTVPNMAKIGLGNIERPVPLKTVPQEANPSGYYTKLEEVSLGKDTMTGHWEIMGLNITEPFDTFWNGFPEEILTQIEEFSGRKVIREANKPYSGTAVIDDFGPRQMETGELIIYTSADPVLQIAAHEEVIPLEELYRICEYARSITLDRPALLGRIIARPYVGEPGNFTRTANRHDYAVSPFEPTVLDKLNEAGIDTYSVGKINDIFNGAGINHDMGHNQSNNHGVDNLVKALKDENFKHGFSFTNLVDFDALYGHRRNPHGYRDCLEEFDARIPEIIENMREDDLLMITADHGNDPTYAGTDHTREYIPLLIFGKSLSGHGHIPVGHFADISATVAENFGVDKAMIGESFLDKLV.

Residues Asp13, Asp298, His303, Asp339, His340, and His351 each contribute to the Mn(2+) site.

It belongs to the phosphopentomutase family. It depends on Mn(2+) as a cofactor.

Its subcellular location is the cytoplasm. It carries out the reaction 2-deoxy-alpha-D-ribose 1-phosphate = 2-deoxy-D-ribose 5-phosphate. The enzyme catalyses alpha-D-ribose 1-phosphate = D-ribose 5-phosphate. It functions in the pathway carbohydrate degradation; 2-deoxy-D-ribose 1-phosphate degradation; D-glyceraldehyde 3-phosphate and acetaldehyde from 2-deoxy-alpha-D-ribose 1-phosphate: step 1/2. Its function is as follows. Isomerase that catalyzes the conversion of deoxy-ribose 1-phosphate (dRib-1-P) and ribose 1-phosphate (Rib-1-P) to deoxy-ribose 5-phosphate (dRib-5-P) and ribose 5-phosphate (Rib-5-P), respectively. The chain is Phosphopentomutase from Streptococcus gordonii (strain Challis / ATCC 35105 / BCRC 15272 / CH1 / DL1 / V288).